Consider the following 197-residue polypeptide: MTEIFSDTGFRQLTQMFLAIIFFHTSEYILAIAIHGASKVTLSSLLISKHYALAMLISVLEYIAEIVFFPGLKQHWWISNFGLTMIILGEILRKTAIITAGRSFTHLIKIRREEHHKLVTEGVYQIMRHPSYSGFLIWSVGTQVMLCNPISAIAFAVVVWRFFAERIPYEEHYLKQFFGRQYVEYAQRVPSGVPFVN.

3 helical membrane passes run 16 to 36 (MFLA…AIHG), 52 to 72 (ALAM…FPGL), and 81 to 101 (FGLT…ITAG). S-adenosyl-L-methionine is bound by residues 116–119 (HKLV), Tyr124, and 129–132 (HPSY). Residues 140 to 160 (VGTQVMLCNPISAIAFAVVVW) form a helical membrane-spanning segment. Residue Arg166 participates in substrate binding. Position 170 (Glu170) interacts with S-adenosyl-L-methionine.

This sequence belongs to the class VI-like SAM-binding methyltransferase superfamily. Isoprenylcysteine carboxyl methyltransferase family. The cofactor is Zn(2+). As to expression, expressed in flowers, stems, leaves, roots and siliques. Detected in apices and vascular tissues of leaves and roots, in the stigma and in the filaments and anthers of stamen. Not found in petioles or hypocotyls.

The protein localises to the endoplasmic reticulum membrane. The enzyme catalyses [protein]-C-terminal S-[(2E,6E)-farnesyl]-L-cysteine + S-adenosyl-L-methionine = [protein]-C-terminal S-[(2E,6E)-farnesyl]-L-cysteine methyl ester + S-adenosyl-L-homocysteine. Its activity is regulated as follows. Inhibited by farnesylthioacetic acid (FTAA) and N-acetyl-S-trans, trans-farnesyl-l-cysteine (AFC). Functionally, catalyzes the post-translational methylation of isoprenylated C-terminal cysteine residues, resulting in the modulation of the function of prenylated proteins. Involved in negative regulation of abscisic acid signaling. Carboxyl methylation is a reversible and potentially regulated step in the post-translational modification of prenylated proteins. The sequence is that of Protein-S-isoprenylcysteine O-methyltransferase B from Arabidopsis thaliana (Mouse-ear cress).